A 279-amino-acid polypeptide reads, in one-letter code: Very long chain fatty acid elongase 1 (279 aa).

M1 carries the N-acetylmethionine modification. A run of 7 helical transmembrane segments spans residues 23-43, 61-81, 110-130, 137-154, 176-196, 203-223, and 231-251; these read PLMGSPLLITSILLTYVYFIL, FMIVYNFSLVILSLYIVYEFL, VAWLFMLSKVIELMDTVIFIL, VTFLHVFHHSVLPWSWWW, VVMYLYYGLSALGPVAQPYLW, AIQLIQFVLVSLHISQYYFMP, and IIIHLIWMYGTIFFILFSNFW. The short motif at 275–279 is the Di-lysine motif element; sequence KVKAN.

This sequence belongs to the ELO family. ELOVL1 subfamily. Interacts with LASS2, TECR and HSD17B12. Interacts with TECR. As to expression, expressed in a broad variety of tissues. Highly expressed in stomach, lung, kidney, skin and intestine. Moderately expressed in white adipose tissue, liver, spleen, brain, brown adipose tissue, heart and muscle. Weakly expressed in testis.

The protein resides in the endoplasmic reticulum membrane. It carries out the reaction a very-long-chain acyl-CoA + malonyl-CoA + H(+) = a very-long-chain 3-oxoacyl-CoA + CO2 + CoA. It catalyses the reaction eicosanoyl-CoA + malonyl-CoA + H(+) = 3-oxodocosanoyl-CoA + CO2 + CoA. The catalysed reaction is docosanoyl-CoA + malonyl-CoA + H(+) = 3-oxotetracosanoyl-CoA + CO2 + CoA. The enzyme catalyses tetracosanoyl-CoA + malonyl-CoA + H(+) = 3-oxohexacosanoyl-CoA + CO2 + CoA. It carries out the reaction (11Z)-eicosenoyl-CoA + malonyl-CoA + H(+) = 3-oxo-(13Z)-docosenoyl-CoA + CO2 + CoA. It catalyses the reaction (13Z)-docosenoyl-CoA + malonyl-CoA + H(+) = 3-oxo-(15Z)-tetracosenoyl-CoA + CO2 + CoA. Its pathway is lipid metabolism; fatty acid biosynthesis. In terms of biological role, catalyzes the first and rate-limiting reaction of the four reactions that constitute the long-chain fatty acids elongation cycle. This endoplasmic reticulum-bound enzymatic process allows the addition of 2 carbons to the chain of long- and very long-chain fatty acids (VLCFAs) per cycle. Condensing enzyme that exhibits activity toward saturated and monounsaturated acyl-CoA substrates, with the highest activity towards C22:0 acyl-CoA. May participate in the production of both saturated and monounsaturated VLCFAs of different chain lengths that are involved in multiple biological processes as precursors of membrane lipids and lipid mediators. Important for saturated C24:0 and monounsaturated C24:1 sphingolipid synthesis. Indirectly inhibits RPE65 via production of VLCFAs. The sequence is that of Very long chain fatty acid elongase 1 from Mus musculus (Mouse).